The sequence spans 264 residues: 3-methyl-2-oxobutanoate hydroxymethyltransferase (264 aa).

Residues Asp45 and Asp84 each contribute to the Mg(2+) site. Residues 45–46 (DS), Asp84, and Lys112 each bind 3-methyl-2-oxobutanoate. Mg(2+) is bound at residue Glu114. The active-site Proton acceptor is the Glu181.

The protein belongs to the PanB family. Homodecamer; pentamer of dimers. Mg(2+) serves as cofactor.

It is found in the cytoplasm. The enzyme catalyses 3-methyl-2-oxobutanoate + (6R)-5,10-methylene-5,6,7,8-tetrahydrofolate + H2O = 2-dehydropantoate + (6S)-5,6,7,8-tetrahydrofolate. It participates in cofactor biosynthesis; (R)-pantothenate biosynthesis; (R)-pantoate from 3-methyl-2-oxobutanoate: step 1/2. Functionally, catalyzes the reversible reaction in which hydroxymethyl group from 5,10-methylenetetrahydrofolate is transferred onto alpha-ketoisovalerate to form ketopantoate. This Shewanella putrefaciens (strain CN-32 / ATCC BAA-453) protein is 3-methyl-2-oxobutanoate hydroxymethyltransferase.